We begin with the raw amino-acid sequence, 475 residues long: Tryptophan--tRNA ligase, cytoplasmic (475 aa).

The 57-residue stretch at 12-68 (SPQELFSSIAAQGELVKSLKARKAPKEEIDSAVKMLLSLKTSYKEAMGEDYKADCPP) folds into the WHEP-TRS domain. The segment at 61 to 87 (DYKADCPPGNSTPDSHGDPEAVDDKED) is disordered. The residue at position 158 (Lys-158) is an N6-succinyllysine. The short motif at 168–177 (PSSEAMHVGH) is the 'HIGH' region element. Positions 353 to 357 (KMSAS) match the 'KMSKS' region motif. Ser-355 carries the post-translational modification Phosphoserine.

This sequence belongs to the class-I aminoacyl-tRNA synthetase family. Homodimer. Interacts with oxidized form of GAPDH. Post-translationally, proteolytic cleavage generates 2 forms; T1-TrpRS and T2-TrpRS.

Its subcellular location is the cytoplasm. It carries out the reaction tRNA(Trp) + L-tryptophan + ATP = L-tryptophyl-tRNA(Trp) + AMP + diphosphate + H(+). Its function is as follows. Catalyzes the attachment of tryptophan to tRNA(Trp) in a two-step reaction: tryptophan is first activated by ATP to form Trp-AMP and then transferred to the acceptor end of the tRNA(Trp). Could also possess an angiostatic activity. In Oryctolagus cuniculus (Rabbit), this protein is Tryptophan--tRNA ligase, cytoplasmic (WARS1).